A 510-amino-acid chain; its full sequence is NAD(P)H-quinone oxidoreductase subunit 2 A, chloroplastic (510 aa).

Helical transmembrane passes span 24–44 (LLLFDGSFIFPECILIFGLIL), 57–77 (IPWLYFISSTSLVMSITALLF), 99–119 (IFQFLILLCSTLCIPLSVEYI), 124–144 (MAITEFLLFVLTATLGGMFLC), 149–169 (LITIFVAPECFSLCSYLLSGY), 183–203 (YLLMGGASSSILVHGFSWLYG), 227–247 (PGISIALIFITVGIGFKLSPA), 295–315 (WHLLLEILAILSMILGNLIAI), 323–343 (MLAYSSIGQIGYVIIGIIVGD), 354–374 (YMLFYISMNLGTFACIVSFGL), 395–415 (ALSLALCLLSLGGLPPLAGFF), 418–438 (LHLFWCGWQAGLYFLVSIGLL), and 484–504 (MIVCVIASTIPGISMNPIIAI).

Belongs to the complex I subunit 2 family. In terms of assembly, NDH is composed of at least 16 different subunits, 5 of which are encoded in the nucleus.

It localises to the plastid. Its subcellular location is the chloroplast thylakoid membrane. It catalyses the reaction a plastoquinone + NADH + (n+1) H(+)(in) = a plastoquinol + NAD(+) + n H(+)(out). It carries out the reaction a plastoquinone + NADPH + (n+1) H(+)(in) = a plastoquinol + NADP(+) + n H(+)(out). In terms of biological role, NDH shuttles electrons from NAD(P)H:plastoquinone, via FMN and iron-sulfur (Fe-S) centers, to quinones in the photosynthetic chain and possibly in a chloroplast respiratory chain. The immediate electron acceptor for the enzyme in this species is believed to be plastoquinone. Couples the redox reaction to proton translocation, and thus conserves the redox energy in a proton gradient. This is NAD(P)H-quinone oxidoreductase subunit 2 A, chloroplastic from Vitis vinifera (Grape).